Here is a 203-residue protein sequence, read N- to C-terminus: NAD(P)H dehydrogenase (quinone) (203 aa).

A Flavodoxin-like domain is found at 3-194 (IMVVYYSAYG…AGANFQGRHV (192 aa)). FMN contacts are provided by residues 9–14 (SAYGHV) and 82–84 (ARF). Tyr11 contacts NAD(+). Trp102 is a binding site for substrate. FMN contacts are provided by residues 117 to 123 (STGTQHG) and His138.

This sequence belongs to the WrbA family. FMN serves as cofactor.

The catalysed reaction is a quinone + NADH + H(+) = a quinol + NAD(+). It catalyses the reaction a quinone + NADPH + H(+) = a quinol + NADP(+). This is NAD(P)H dehydrogenase (quinone) from Syntrophus aciditrophicus (strain SB).